A 107-amino-acid chain; its full sequence is Inner membrane protein YgbE (107 aa).

Residues Met1–Glu20 lie on the Cytoplasmic side of the membrane. Residues Thr21–Met43 form a helical membrane-spanning segment. Residues Leu44 to Phe52 are Periplasmic-facing. A helical membrane pass occupies residues Phe53 to Leu75. The Cytoplasmic segment spans residues His76–Ser86. Residues Ile87–Leu106 form a helical membrane-spanning segment. A topological domain (periplasmic) is located at residue Gly107.

Its subcellular location is the cell inner membrane. This is Inner membrane protein YgbE (ygbE) from Escherichia coli (strain K12).